A 430-amino-acid polypeptide reads, in one-letter code: NAD(P)(+) glycohydrolase toxin Tse6 (430 aa).

3 helical membrane passes run 17–37, 46–66, and 193–213; these read FGVA…AAVV, LAAV…FQIV, and LLLA…IGGL.

Interacts with Tsi6, VgrG1a, EagT6 and EF-Tu.

It localises to the membrane. The catalysed reaction is NAD(+) + H2O = ADP-D-ribose + nicotinamide + H(+). Its function is as follows. Type VI secretion exported toxin that acts as a glycohydrolase on bacterial target cells and degrades the essential dinucleotides NAD(+) and NADP(+), thereby inducing bacteriostasis. The activity resides in the C-terminal region that is initially neutralized by the cognate immunity protein Tsi6. In Pseudomonas aeruginosa (strain ATCC 15692 / DSM 22644 / CIP 104116 / JCM 14847 / LMG 12228 / 1C / PRS 101 / PAO1), this protein is NAD(P)(+) glycohydrolase toxin Tse6.